A 488-amino-acid chain; its full sequence is Tetratricopeptide repeat protein 23 (488 aa).

5 TPR repeats span residues 45–78 (LHLCEERAKSYSSSREYKQAIQELVRCVALTRIC), 137–170 (LELFYTLGRALLSLQKFKDASENLIKAERLSKEM), 186–219 (SRIKLSFAQLYQGQKRSKEAFPFYQKALEYTEIT), 228–261 (VQVLRELAGVEQALGLYAAAISHFSRDRLPTPQP), and 398–431 (AETYRALGRADLAQGNNSGAYAKLKKCVQIETFL).

Associated with the EvC complex composed of EFCAB7, IQCE, EVC2 and EVC.

It localises to the cell projection. The protein resides in the cilium. In terms of biological role, participates positively in the ciliary Hedgehog (Hh) signaling. This Mus musculus (Mouse) protein is Tetratricopeptide repeat protein 23 (Ttc23).